We begin with the raw amino-acid sequence, 578 residues long: NADPH oxidase 4 (578 aa).

Topologically, residues 1-16 (MAVSWRSWLANEGVKH) are cytoplasmic. A helical membrane pass occupies residues 17–37 (LCLFIWLSMNVLLFWKTFLLY). At 38–62 (NQGPEYHYLHQMLGLGLCLSRASAS) the chain is on the extracellular side. Positions 58–303 (RASASVLNLN…YCAERLYRYI (246 aa)) constitute a Ferric oxidoreductase domain. The chain crosses the membrane as a helical span at residues 63–83 (VLNLNCSLILLPMCRTLLAYL). The Cytoplasmic segment spans residues 84–103 (RGSQKVPSRRTRRLLDKSRT). A helical membrane pass occupies residues 104 to 124 (FHITCGVTICIFSGVHVAAHL). The Extracellular portion of the chain corresponds to 125 to 154 (VNALNFSVNYSEDFVELNAARYRDEDPRKL). Asn133 carries an N-linked (GlcNAc...) asparagine glycan. The chain crosses the membrane as a helical span at residues 155-175 (LFTTVPGLTGVCMVVVLFLMI). Residues 176-188 (TASTYAIRVSNYD) are Cytoplasmic-facing. Residues 189 to 209 (IFWYTHNLFFVFYMLLTLHVS) traverse the membrane as a helical segment. The Extracellular portion of the chain corresponds to 210–424 (GGLLKYQTNL…SPFEESLNYE (215 aa)). An E-loop; essential for H2O2 generating catalytic activity region spans residues 218–273 (NLDTHPPGCISLNRTSSQNISLPEYFSEHFHEPFPEGFSKPEEFTQNTFVKICMEE). The N-linked (GlcNAc...) asparagine glycan is linked to Asn230. Positions 248–575 (HEPFPEGFSK…YGTRFEYNKE (328 aa)) are mediates interaction with TLR4. Positions 304-419 (RSNKPVTIIS…DGPFGSPFEE (116 aa)) constitute an FAD-binding FR-type domain. Residues 425 to 445 (VSLCVAGGIGVTPFASILNTL) form a helical membrane-spanning segment. Topologically, residues 446 to 578 (LDDWKPYKLR…RFEYNKESFS (133 aa)) are cytoplasmic.

As to quaternary structure, interacts with, relocalizes and stabilizes CYBA/p22phox. Interacts with TLR4. Interacts with protein disulfide isomerase. Interacts with PPP1R15A. Interacts with LRRC8A; this interaction prevents the ubiquitin-mediated degradation of LRRC8A. Requires heme as cofactor. In terms of processing, N-glycosylation is required for the function.

The protein localises to the cytoplasm. It localises to the endoplasmic reticulum membrane. Its subcellular location is the cell membrane. The protein resides in the cell junction. It is found in the focal adhesion. The protein localises to the nucleus. It catalyses the reaction NADPH + 2 O2 = 2 superoxide + NADP(+) + H(+). The enzyme catalyses NADPH + O2 + H(+) = H2O2 + NADP(+). Activated by insulin. Inhibited by diphenylene iodonium. Inhibited by plumbagin. Activated by phorbol 12-myristate 13-acetate (PMA). Its function is as follows. NADPH oxidase that catalyzes predominantly the reduction of oxygen to H2O2. Can also catalyze to a smaller extent, the reduction of oxygen to superoxide. May function as an oxygen sensor regulating the KCNK3/TASK-1 potassium channel and HIF1A activity. May regulate insulin signaling cascade. May play a role in apoptosis, bone resorption and lipolysaccharide-mediated activation of NFKB. May produce superoxide in the nucleus and play a role in regulating gene expression upon cell stimulation. Promotes ferroptosis, reactive oxygen species production and reduced glutathione (GSH) levels by activating NLRP3 inflammasome activation and cytokine release. This Pongo abelii (Sumatran orangutan) protein is NADPH oxidase 4 (NOX4).